A 121-amino-acid polypeptide reads, in one-letter code: UPF0102 protein Strop_1320 (121 aa).

Belongs to the UPF0102 family.

This is UPF0102 protein Strop_1320 from Salinispora tropica (strain ATCC BAA-916 / DSM 44818 / JCM 13857 / NBRC 105044 / CNB-440).